Reading from the N-terminus, the 104-residue chain is Large ribosomal subunit protein uL24 (104 aa).

Belongs to the universal ribosomal protein uL24 family. As to quaternary structure, part of the 50S ribosomal subunit.

One of two assembly initiator proteins, it binds directly to the 5'-end of the 23S rRNA, where it nucleates assembly of the 50S subunit. Functionally, one of the proteins that surrounds the polypeptide exit tunnel on the outside of the subunit. The polypeptide is Large ribosomal subunit protein uL24 (Klebsiella pneumoniae (strain 342)).